The sequence spans 202 residues: Adenylyl-sulfate kinase (202 aa).

Residue Gly31–Ser38 coordinates ATP. The active-site Phosphoserine intermediate is Ser105.

Belongs to the APS kinase family.

It catalyses the reaction adenosine 5'-phosphosulfate + ATP = 3'-phosphoadenylyl sulfate + ADP + H(+). Its pathway is sulfur metabolism; hydrogen sulfide biosynthesis; sulfite from sulfate: step 2/3. Catalyzes the synthesis of activated sulfate. The sequence is that of Adenylyl-sulfate kinase (MET14) from Saccharomyces bayanus (Yeast).